We begin with the raw amino-acid sequence, 216 residues long: Adenylate kinase (216 aa).

Glycine 10–threonine 15 lines the ATP pocket. The tract at residues serine 30 to valine 59 is NMP. AMP contacts are provided by residues threonine 31, arginine 36, glutamine 57 to valine 59, glycine 85 to arginine 88, and glutamine 92. Residues glycine 126–aspartate 163 are LID. Arginine 127 contacts ATP. Zn(2+)-binding residues include cysteine 130 and cysteine 133. Residue serine 136–tyrosine 137 coordinates ATP. Zn(2+) is bound by residues cysteine 150 and cysteine 153. AMP is bound by residues arginine 160 and arginine 171. Glutamate 199 serves as a coordination point for ATP.

This sequence belongs to the adenylate kinase family. In terms of assembly, monomer.

The protein localises to the cytoplasm. The catalysed reaction is AMP + ATP = 2 ADP. It functions in the pathway purine metabolism; AMP biosynthesis via salvage pathway; AMP from ADP: step 1/1. Catalyzes the reversible transfer of the terminal phosphate group between ATP and AMP. Plays an important role in cellular energy homeostasis and in adenine nucleotide metabolism. The sequence is that of Adenylate kinase from Clostridium botulinum (strain ATCC 19397 / Type A).